A 329-amino-acid chain; its full sequence is MTADPGSSVPPAVVHRPVMVDRVVELLLPALGYPGAIVVDATVGLGGHAEAVVRAASAATLIGLDHDPHAIRLAAQRLAGYADRVQLVNVAFDRLAQVLSERGISAVAAILFDLGLSSLHIDDPARGFAYSRDVPLDMRMDPRLPRTAADVVNTYSATELARVLRVYGEERFAVRIADAIVRRRARQPITSTRDLSELVREAIPAPARRTGGHPAKRTFQALRIEVNDELGRLERTLPVAIAALQPGGRIVVLSYHSLEDRTVKRFFQAAASDATPAGLPTALPTARPRLRLLTRGAERPSPAEVAANPRAASARLRAAEKIRDTREAA.

S-adenosyl-L-methionine is bound by residues 46-48 (GGH), aspartate 65, phenylalanine 92, aspartate 113, and histidine 120. Residues 295–329 (RGAERPSPAEVAANPRAASARLRAAEKIRDTREAA) are disordered. The segment covering 317 to 329 (RAAEKIRDTREAA) has biased composition (basic and acidic residues).

This sequence belongs to the methyltransferase superfamily. RsmH family.

It localises to the cytoplasm. It catalyses the reaction cytidine(1402) in 16S rRNA + S-adenosyl-L-methionine = N(4)-methylcytidine(1402) in 16S rRNA + S-adenosyl-L-homocysteine + H(+). Specifically methylates the N4 position of cytidine in position 1402 (C1402) of 16S rRNA. This is Ribosomal RNA small subunit methyltransferase H from Acidothermus cellulolyticus (strain ATCC 43068 / DSM 8971 / 11B).